Reading from the N-terminus, the 65-residue chain is Light-harvesting protein B800/830/1020 beta-2 chain (65 aa).

Over 1–17 (TDIRTGLTDEECQEIHE) the chain is Cytoplasmic. A bacteriochlorophyll is bound by residues histidine 16 and asparagine 34. Residues 18 to 40 (MNMLGMHAYWSIGLIANALAYAW) form a helical membrane-spanning segment. Over 41-65 (RPFHQGRAGNRLEDHAPDYVRSALT) the chain is Periplasmic.

The protein belongs to the antenna complex beta subunit family. In terms of assembly, the core complex is formed by different alpha and beta chains, binding bacteriochlorophyll molecules, and arranged most probably in tetrameric structures disposed around the reaction center. The non-pigmented gamma chains may constitute additional components.

The protein resides in the cell inner membrane. In terms of biological role, antenna complexes are light-harvesting systems, which transfer the excitation energy to the reaction centers. The chain is Light-harvesting protein B800/830/1020 beta-2 chain from Halorhodospira halochloris (Ectothiorhodospira halochloris).